The following is a 99-amino-acid chain: Large ribosomal subunit protein bL28 (99 aa).

Belongs to the bacterial ribosomal protein bL28 family.

The protein is Large ribosomal subunit protein bL28 of Rhizobium leguminosarum bv. trifolii (strain WSM2304).